We begin with the raw amino-acid sequence, 448 residues long: Potassium/proton antiporter CemA (448 aa).

Helical transmembrane passes span 47-67, 213-233, 314-334, and 395-415; these read IVFY…LSLL, LSSL…STLF, IISH…LFVA, and IISC…KYLI.

Belongs to the CemA family.

The protein resides in the plastid membrane. The enzyme catalyses K(+)(in) + H(+)(out) = K(+)(out) + H(+)(in). Its function is as follows. May be involved in proton extrusion. The chain is Potassium/proton antiporter CemA from Aneura mirabilis (Parasitic liverwort).